A 117-amino-acid chain; its full sequence is S-adenosylmethionine decarboxylase proenzyme (117 aa).

Serine 63 (schiff-base intermediate with substrate; via pyruvic acid) is an active-site residue. The residue at position 63 (serine 63) is a Pyruvic acid (Ser); by autocatalysis. Histidine 68 acts as the Proton acceptor; for processing activity in catalysis. The active-site Proton donor; for catalytic activity is the cysteine 83.

Belongs to the prokaryotic AdoMetDC family. Type 1 subfamily. As to quaternary structure, heterotetramer of two alpha and two beta chains arranged as a dimer of alpha/beta heterodimers. Requires pyruvate as cofactor. In terms of processing, is synthesized initially as an inactive proenzyme. Formation of the active enzyme involves a self-maturation process in which the active site pyruvoyl group is generated from an internal serine residue via an autocatalytic post-translational modification. Two non-identical subunits are generated from the proenzyme in this reaction, and the pyruvate is formed at the N-terminus of the alpha chain, which is derived from the carboxyl end of the proenzyme. The post-translation cleavage follows an unusual pathway, termed non-hydrolytic serinolysis, in which the side chain hydroxyl group of the serine supplies its oxygen atom to form the C-terminus of the beta chain, while the remainder of the serine residue undergoes an oxidative deamination to produce ammonia and the pyruvoyl group blocking the N-terminus of the alpha chain.

The catalysed reaction is S-adenosyl-L-methionine + H(+) = S-adenosyl 3-(methylsulfanyl)propylamine + CO2. The protein operates within amine and polyamine biosynthesis; S-adenosylmethioninamine biosynthesis; S-adenosylmethioninamine from S-adenosyl-L-methionine: step 1/1. Its function is as follows. Catalyzes the decarboxylation of S-adenosylmethionine to S-adenosylmethioninamine (dcAdoMet), the propylamine donor required for the synthesis of the polyamines spermine and spermidine from the diamine putrescine. In Methanococcus aeolicus (strain ATCC BAA-1280 / DSM 17508 / OCM 812 / Nankai-3), this protein is S-adenosylmethionine decarboxylase proenzyme.